Consider the following 338-residue polypeptide: Phenylalanine--tRNA ligase alpha subunit (338 aa).

Glutamate 253 lines the Mg(2+) pocket.

This sequence belongs to the class-II aminoacyl-tRNA synthetase family. Phe-tRNA synthetase alpha subunit type 1 subfamily. As to quaternary structure, tetramer of two alpha and two beta subunits. The cofactor is Mg(2+).

Its subcellular location is the cytoplasm. It carries out the reaction tRNA(Phe) + L-phenylalanine + ATP = L-phenylalanyl-tRNA(Phe) + AMP + diphosphate + H(+). The polypeptide is Phenylalanine--tRNA ligase alpha subunit (Legionella pneumophila (strain Lens)).